The following is a 762-amino-acid chain: Proline-rich receptor-like protein kinase PERK10 (762 aa).

Residues 1–322 (MTTPAQAPRE…PTPVTDNSSS (322 aa)) are disordered. At 1 to 328 (MTTPAQAPRE…NSSSSGISIA (328 aa)) the chain is on the extracellular side. Low complexity predominate over residues 13 to 23 (SLSPSLASPPL). Asparagine 37 carries N-linked (GlcNAc...) asparagine glycosylation. The segment covering 41–57 (PTREPTNGNPPETTNTP) has biased composition (low complexity). Pro residues-rich tracts occupy residues 60-210 (SSPP…PSTP), 231-246 (PPPPGSKRPTPSPPSP), and 254-275 (HPSPPSPPEETLPPPKPSPDPL). Residues 276–305 (PSNSSSPPTLLPPSSVVSPPSPPRKSVSGP) are compositionally biased toward low complexity. Asparagine 278 and asparagine 319 each carry an N-linked (GlcNAc...) asparagine glycan. Residues 329 to 349 (AVVGVSIGVALVLLTLIGVVV) form a helical membrane-spanning segment. Topologically, residues 350 to 762 (CCLKKRKKRL…NSYISKDENL (413 aa)) are cytoplasmic. A disordered region spans residues 370–410 (TPMESSSPRSDSALLKTQSSAPLVGNRSSNRTYLSQSEPGG). Polar residues predominate over residues 372 to 407 (MESSSPRSDSALLKTQSSAPLVGNRSSNRTYLSQSE). The Protein kinase domain occupies 430–706 (FSDENLLGEG…SQIVRAFDSL (277 aa)). ATP is bound by residues 436-444 (LGEGGFGRV) and lysine 458. The Proton acceptor role is filled by aspartate 554.

This sequence belongs to the protein kinase superfamily. Ser/Thr protein kinase family. In terms of assembly, interacts with KIPK1 and KIPK2 (via its cytosolic domain). Mostly expressed in inflorescence bolts and flower buds, and, to a lower extent, in roots, seedlings, leaves and siliques.

Its subcellular location is the cell membrane. It catalyses the reaction L-seryl-[protein] + ATP = O-phospho-L-seryl-[protein] + ADP + H(+). The enzyme catalyses L-threonyl-[protein] + ATP = O-phospho-L-threonyl-[protein] + ADP + H(+). Functionally, could be involved in the negative regulation of root growth. This Arabidopsis thaliana (Mouse-ear cress) protein is Proline-rich receptor-like protein kinase PERK10 (PERK10).